Consider the following 646-residue polypeptide: Phosphomethylpyrimidine synthase (646 aa).

Substrate contacts are provided by residues asparagine 235, methionine 264, tyrosine 293, histidine 329, 349–351, 390–393, and glutamate 429; these read SRG and DGLR. Histidine 433 is a binding site for Zn(2+). Substrate is bound at residue tyrosine 456. Histidine 497 is a Zn(2+) binding site. 3 residues coordinate [4Fe-4S] cluster: cysteine 577, cysteine 580, and cysteine 585.

It belongs to the ThiC family. In terms of assembly, homodimer. It depends on [4Fe-4S] cluster as a cofactor.

The catalysed reaction is 5-amino-1-(5-phospho-beta-D-ribosyl)imidazole + S-adenosyl-L-methionine = 4-amino-2-methyl-5-(phosphooxymethyl)pyrimidine + CO + 5'-deoxyadenosine + formate + L-methionine + 3 H(+). Its pathway is cofactor biosynthesis; thiamine diphosphate biosynthesis. Catalyzes the synthesis of the hydroxymethylpyrimidine phosphate (HMP-P) moiety of thiamine from aminoimidazole ribotide (AIR) in a radical S-adenosyl-L-methionine (SAM)-dependent reaction. The polypeptide is Phosphomethylpyrimidine synthase (Vibrio campbellii (strain ATCC BAA-1116)).